Consider the following 501-residue polypeptide: Probable cytosol aminopeptidase (501 aa).

Mn(2+)-binding residues include Lys-257 and Asp-262. The active site involves Lys-269. The Mn(2+) site is built by Asp-281, Asp-341, and Glu-343. Arg-345 is an active-site residue.

Belongs to the peptidase M17 family. Mn(2+) is required as a cofactor.

The protein resides in the cytoplasm. It catalyses the reaction Release of an N-terminal amino acid, Xaa-|-Yaa-, in which Xaa is preferably Leu, but may be other amino acids including Pro although not Arg or Lys, and Yaa may be Pro. Amino acid amides and methyl esters are also readily hydrolyzed, but rates on arylamides are exceedingly low.. It carries out the reaction Release of an N-terminal amino acid, preferentially leucine, but not glutamic or aspartic acids.. Functionally, presumably involved in the processing and regular turnover of intracellular proteins. Catalyzes the removal of unsubstituted N-terminal amino acids from various peptides. This chain is Probable cytosol aminopeptidase, found in Synechococcus sp. (strain RCC307).